The chain runs to 428 residues: Cholecystokinin receptor type A (428 aa).

Residues 1–41 (MDVVDSLLVNGSNITPPCELGLENETLFCLDQPRPSKEWQP) are Extracellular-facing. N-linked (GlcNAc...) asparagine glycosylation is found at Asn-10 and Asn-24. Cys-18 and Cys-29 form a disulfide bridge. Residues 42–67 (AVQILLYSLIFLLSVLGNTLVITVLI) form a helical membrane-spanning segment. Residues 68 to 77 (RNKRMRTVTN) are Cytoplasmic-facing. Residues 78–104 (IFLLSLAVSDLMLCLFCMPFNLIPNLL) form a helical membrane-spanning segment. At 105-115 (KDFIFGSAVCK) the chain is on the extracellular side. A disulfide bridge connects residues Cys-114 and Cys-196. A helical transmembrane segment spans residues 116–137 (TTTYFMGTSVSVSTFNLVAISL). Residues 138-157 (ERYGAICKPLQSRVWQTKSH) are Cytoplasmic-facing. A helical membrane pass occupies residues 158-178 (ALKVIAATWCLSFTIMTPYPI). Over 179 to 210 (YSNLVPFTKNNNQTANMCRFLLPNDVMQQSWH) the chain is Extracellular. Residue Asn-190 is glycosylated (N-linked (GlcNAc...) asparagine). Residues 211–234 (TFLLLILFLIPGIVMMVAYGLISL) form a helical membrane-spanning segment. The Cytoplasmic portion of the chain corresponds to 235-313 (ELYQGIKFEA…NLMAKKRVIR (79 aa)). The interval 248-272 (KSAKERKPSTTSSGKYEDSDGCYLQ) is disordered. A helical transmembrane segment spans residues 314 to 334 (MLIVIVVLFFLCWMPIFSANA). The Extracellular segment spans residues 335–349 (WRAYDTASAERRLSG). The helical transmembrane segment at 350 to 373 (TPISFILLLSYTSSCVNPIIYCFM) threads the bilayer. Residues 374 to 428 (NKRFRLGFMATFPCCPNPGPPGARGEVGEEEEGGTTGASLSRFSYSHMSASVPPQ) lie on the Cytoplasmic side of the membrane. Cys-387 carries the S-palmitoyl cysteine lipid modification. The segment at 394-428 (PGARGEVGEEEEGGTTGASLSRFSYSHMSASVPPQ) is disordered. Positions 411–422 (ASLSRFSYSHMS) are enriched in polar residues.

The protein belongs to the G-protein coupled receptor 1 family.

The protein localises to the cell membrane. Functionally, receptor for cholecystokinin. Mediates pancreatic growth and enzyme secretion, smooth muscle contraction of the gall bladder and stomach. Has a 1000-fold higher affinity for CCK rather than for gastrin. It modulates feeding and dopamine-induced behavior in the central and peripheral nervous system. This receptor mediates its action by association with G proteins that activate a phosphatidylinositol-calcium second messenger system. This is Cholecystokinin receptor type A (CCKAR) from Homo sapiens (Human).